Consider the following 209-residue polypeptide: Chromophore lyase CpcT/CpeT 1 (209 aa).

Belongs to the CpcT/CpeT biliprotein lyase family.

In terms of biological role, covalently attaches a chromophore to Cys residue(s) of phycobiliproteins. This Trichodesmium erythraeum (strain IMS101) protein is Chromophore lyase CpcT/CpeT 1.